Reading from the N-terminus, the 155-residue chain is MAETETESITTSSPPPISETENSTTLPTTETEKNPNPVTISLRIWPPTQKTRDAVINRLIETLSTESILSKRFGSLESEEASSVAKSIEDEAYAIASATVFGDDDGIEILKAYSKEISKRMLESVKAKSNVASPPPKDGDGIESAVDSKIDSSEA.

2 disordered regions span residues 1–41 (MAET…VTIS) and 124–155 (SVKAKSNVASPPPKDGDGIESAVDSKIDSSEA). Over residues 7-39 (ESITTSSPPPISETENSTTLPTTETEKNPNPVT) the composition is skewed to low complexity. The segment at 28–131 (TTETEKNPNP…LESVKAKSNV (104 aa)) is WPP. Positions 146 to 155 (VDSKIDSSEA) are enriched in basic and acidic residues.

As to quaternary structure, binds to FPP proteins. Interacts with WAP, WIP1, WIP2 and WIP3 through its WPP domain. Interacts with HSP70-1, HSP70-3 and WIT1. Component of a ternary complex composed of WPP1, HSP70-1 and WIT1. As to expression, expressed in roots, stems and leaves.

It is found in the nucleus envelope. Its subcellular location is the cytoplasm. It localises to the nucleus. The protein resides in the golgi apparatus. The protein localises to the nucleus matrix. Regulates the mitotic activity in roots. Plays a role with HSP70-1 in facilitating WIT1 nuclear envelope targeting. The polypeptide is WPP domain-containing protein 1 (WPP1) (Arabidopsis thaliana (Mouse-ear cress)).